Consider the following 430-residue polypeptide: Adenylosuccinate synthetase (430 aa).

Residues 12–18 and 40–42 contribute to the GTP site; these read GDEGKGK and GHT. Residue Asp13 is the Proton acceptor of the active site. Residues Asp13 and Gly40 each coordinate Mg(2+). IMP is bound by residues 13–16, 38–41, Thr130, Arg144, Gln225, Thr240, and Arg304; these read DEGK and NAGH. His41 functions as the Proton donor in the catalytic mechanism. 300–306 is a substrate binding site; it reads STTGRPR. Residues Arg306, 332-334, and 414-416 contribute to the GTP site; these read KLD and SVG.

This sequence belongs to the adenylosuccinate synthetase family. Homodimer. Mg(2+) serves as cofactor.

It is found in the cytoplasm. The enzyme catalyses IMP + L-aspartate + GTP = N(6)-(1,2-dicarboxyethyl)-AMP + GDP + phosphate + 2 H(+). It functions in the pathway purine metabolism; AMP biosynthesis via de novo pathway; AMP from IMP: step 1/2. In terms of biological role, plays an important role in the de novo pathway of purine nucleotide biosynthesis. Catalyzes the first committed step in the biosynthesis of AMP from IMP. This Pelobacter propionicus (strain DSM 2379 / NBRC 103807 / OttBd1) protein is Adenylosuccinate synthetase.